The following is a 423-amino-acid chain: Glutamate-1-semialdehyde 2,1-aminomutase (423 aa).

Residue Lys262 is modified to N6-(pyridoxal phosphate)lysine.

This sequence belongs to the class-III pyridoxal-phosphate-dependent aminotransferase family. HemL subfamily. The cofactor is pyridoxal 5'-phosphate.

Its subcellular location is the cytoplasm. The enzyme catalyses (S)-4-amino-5-oxopentanoate = 5-aminolevulinate. It participates in porphyrin-containing compound metabolism; protoporphyrin-IX biosynthesis; 5-aminolevulinate from L-glutamyl-tRNA(Glu): step 2/2. In Methanosphaera stadtmanae (strain ATCC 43021 / DSM 3091 / JCM 11832 / MCB-3), this protein is Glutamate-1-semialdehyde 2,1-aminomutase.